Consider the following 272-residue polypeptide: Proteasome subunit beta type-5 (272 aa).

Positions 1–62 (MINIDFDNIE…APKALEFAHG (62 aa)) are cleaved as a propeptide — removed in mature form. Thr-63 serves as the catalytic Nucleophile.

The protein belongs to the peptidase T1B family. As to quaternary structure, the 26S proteasome consists of a 20S proteasome core and two 19S regulatory subunits. The 20S proteasome core is composed of 28 subunits that are arranged in four stacked rings, resulting in a barrel-shaped structure. The two end rings are each formed by seven alpha subunits, and the two central rings are each formed by seven beta subunits. The catalytic chamber with the active sites is on the inside of the barrel.

The protein resides in the cytoplasm. The protein localises to the nucleus. The enzyme catalyses Cleavage of peptide bonds with very broad specificity.. Its function is as follows. The proteasome is a multicatalytic proteinase complex which is characterized by its ability to cleave peptides with Arg, Phe, Tyr, Leu, and Glu adjacent to the leaving group at neutral or slightly basic pH. The proteasome has an ATP-dependent proteolytic activity. The protein is Proteasome subunit beta type-5 (psmB5) of Dictyostelium discoideum (Social amoeba).